A 486-amino-acid polypeptide reads, in one-letter code: UDP-N-acetylmuramate--L-alanine ligase (486 aa).

Residue 123–129 (GTHGKTT) participates in ATP binding.

This sequence belongs to the MurCDEF family.

It is found in the cytoplasm. The enzyme catalyses UDP-N-acetyl-alpha-D-muramate + L-alanine + ATP = UDP-N-acetyl-alpha-D-muramoyl-L-alanine + ADP + phosphate + H(+). It functions in the pathway cell wall biogenesis; peptidoglycan biosynthesis. Cell wall formation. In Pseudomonas syringae pv. syringae (strain B728a), this protein is UDP-N-acetylmuramate--L-alanine ligase.